Here is a 59-residue protein sequence, read N- to C-terminus: UPF0337 protein MM_2677 (59 aa).

Composition is skewed to basic and acidic residues over residues 1-24 (MKEG…KESA) and 33-59 (MEAK…EFEK). Residues 1–59 (MKEGTKEEMEGKFSKAKGEIKESAGEMTGDIEMEAKGEAEKRKGEAQEKVGKIRKEFEK) are disordered.

This sequence belongs to the UPF0337 (CsbD) family.

This chain is UPF0337 protein MM_2677, found in Methanosarcina mazei (strain ATCC BAA-159 / DSM 3647 / Goe1 / Go1 / JCM 11833 / OCM 88) (Methanosarcina frisia).